Reading from the N-terminus, the 338-residue chain is MARKLFTPITIKDMTLKNRIVMSPMCMYSSHEKDGKLTPFHMAHYISRAIGQVGLIIVEASAVNPQGRITDQDLGIWSDEHIEGFAKLTEQVKEQGSKIGIQLAHAGRKAELEGDIFAPSAIAFDEQSATPVEMSAEKVKETVQEFKQAAARAKEAGFDVIEIHAAHGYLIHEFLSPLSNHRTDEYGGSPENRYRFLREIIDEVKQVWDGPLFVRVSASDYTDKGLDIADHIGFAKWMKEQGVDLIDCSSGALVHADINVFPGYQVSFAEKIREQADMATGAVGMITDGSMAEEILQNGRADLIFIGRELLRDPFFARTAAKQLNTEIPAPVQYERGW.

23–26 (SPMC) provides a ligand contact to FMN. Position 28 (Tyr-28) interacts with substrate. Positions 60 and 102 each coordinate FMN. A substrate-binding site is contributed by 164 to 167 (HAAH). Residues Arg-215 and 307-308 (GR) each bind FMN.

Belongs to the NADH:flavin oxidoreductase/NADH oxidase family. NamA subfamily. Homotetramer. Composed of a dimer of active dimers. Requires FMN as cofactor.

It catalyses the reaction A + NADPH + H(+) = AH2 + NADP(+). Its activity is regulated as follows. Inhibited by p-hydroxybenzaldehyde (pHBA) and p-nitrophenol (pNP). Catalyzes the reduction of the double bond of an array of alpha,beta-unsaturated aldehydes and ketones. It also reduces the nitro group of nitroester and nitroaromatic compounds. It could have a role in detoxification processes. The chain is NADPH dehydrogenase (namA) from Bacillus subtilis (strain 168).